The chain runs to 776 residues: Microtubule-associated protein tau (776 aa).

Positions 1–26 are enriched in basic and acidic residues; it reads MAEPRQEFEVMEDHAGTYGLGDRKDQ. The interval 1–591 is disordered; the sequence is MAEPRQEFEV…PVPMPDLKNV (591 aa). A2 is subject to N-acetylalanine. Y18 and Y29 each carry phosphotyrosine. A Glycyl lysine isopeptide (Lys-Gly) (interchain with G-Cter in ubiquitin) cross-link involves residue K44. S46 and S61 each carry phosphoserine. A compositionally biased stretch (polar residues) spans 61–71; that stretch reads SETSDAKSTPT. Residues T69, T71, and T111 each carry the phosphothreonine modification. 2 stretches are compositionally biased toward basic and acidic residues: residues 179-189 and 207-216; these read EGGRHAPELLK and GGKERPGSKE. S214 is subject to Phosphoserine. Over residues 217–228 the composition is skewed to acidic residues; sequence EVDEDRDVDESS. Basic and acidic residues-rich tracts occupy residues 293 to 303 and 314 to 323; these read KGQDAHLEFTF and EQAHSEEHLG. A compositionally biased stretch (low complexity) spans 324 to 340; that stretch reads RAAFPGAPGEGPEARGP. 2 stretches are compositionally biased toward basic and acidic residues: residues 344-356 and 381-393; these read EDTK…EPSE and KSKD…DKKA. The span at 440–452 shows a compositional bias: polar residues; it reads KYVSSVTPRTGSS. Residues 455 to 466 are compositionally biased toward basic and acidic residues; it reads KEMKLKGADGKT. Position 470 is a phosphothreonine (T470). At R472 the chain carries Omega-N-methylarginine. K480 carries the N6,N6-dimethyllysine; alternate modification. K480 bears the N6-acetyllysine; alternate mark. Phosphothreonine occurs at positions 486, 492, and 498. Phosphoserine occurs at positions 502, 526, and 530. Residues 517–528 show a composition bias toward basic and acidic residues; that stretch reads RSERGEPPKSGD. The span at 529–549 shows a compositional bias: low complexity; sequence RSGYSSPGSPGTPGSRSRTPS. Y532 is subject to Phosphotyrosine. Phosphoserine is present on residues S533, S534, and S537. 2 positions are modified to phosphothreonine: T540 and T547. Residue S549 is modified to Phosphoserine. The residue at position 552 (T552) is a Phosphothreonine. K560 is subject to N6-acetyllysine. T566 bears the Phosphothreonine mark. 2 positions are modified to phosphoserine: S570 and S572. Tau/MAP repeat units follow at residues 579–609, 610–640, 641–671, and 672–703; these read QTAP…GGGK, VQII…GGGS, VQIV…GGGQ, and VEVK…GGGN. K589 is covalently cross-linked (Glycyl lysine isopeptide (Lys-Gly) (interchain with G-Cter in ubiquitin)). Position 594 is an N6-acetyllysine; alternate (K594). Residue K594 is modified to N6-methyllysine; alternate. K594 is covalently cross-linked (Glycyl lysine isopeptide (Lys-Gly) (interchain with G-Cter in ubiquitin); alternate). S597 bears the Phosphoserine mark. K602 is covalently cross-linked (Glycyl lysine isopeptide (Lys-Gly) (interchain with G-Cter in ubiquitin)). At K616 the chain carries N6-acetyllysine; alternate. Residue K616 forms a Glycyl lysine isopeptide (Lys-Gly) (interchain with G-Cter in ubiquitin); alternate linkage. Phosphoserine occurs at positions 620 and 624. Residue K625 is modified to N6-acetyllysine. A Phosphoserine modification is found at S628. An N6-acetyllysine; alternate modification is found at K633. K633 is covalently cross-linked (Glycyl lysine isopeptide (Lys-Gly) (interchain with G-Cter in ubiquitin); alternate). S640 carries the post-translational modification Phosphoserine. At K646 the chain carries N6,N6-dimethyllysine; alternate. An N6-acetyllysine; alternate mark is found at K646, K652, and K656. Glycyl lysine isopeptide (Lys-Gly) (interchain with G-Cter in ubiquitin); alternate cross-links involve residues K646, K652, and K656. S659 is subject to Phosphoserine. N6-acetyllysine; alternate occurs at positions 666, 678, and 682. Residues K666, K678, and K682 each participate in a glycyl lysine isopeptide (Lys-Gly) (interchain with G-Cter in ubiquitin); alternate cross-link. R684 bears the Omega-N-methylarginine mark. At S687 the chain carries Phosphoserine. K688 participates in a covalent cross-link: Glycyl lysine isopeptide (Lys-Gly) (interchain with G-Cter in ubiquitin). Position 691 is a phosphoserine (S691). An N6-acetyllysine; alternate modification is found at K704. K704 participates in a covalent cross-link: Glycyl lysine isopeptide (Lys-Gly) (interchain with G-Cter in ubiquitin); alternate. A Glycyl lysine isopeptide (Lys-Gly) (interchain with G-Cter in ubiquitin) cross-link involves residue K710. Position 720 is an N6-acetyllysine; alternate (K720). K720 participates in a covalent cross-link: Glycyl lysine isopeptide (Lys-Gly) (interchain with G-Cter in ubiquitin); alternate. Y729 is subject to Phosphotyrosine. Phosphoserine is present on residues S731 and S735. A disordered region spans residues 733-752; that stretch reads VVSGDTSPRHLSNVSSTGSI. The span at 736–751 shows a compositional bias: polar residues; it reads GDTSPRHLSNVSSTGS. The residue at position 738 (T738) is a Phosphothreonine. Residues S739, S744, S751, and S757 each carry the phosphoserine modification. T762 carries the post-translational modification Phosphothreonine.

In terms of assembly, interacts with MARK1, MARK2, MARK3 and MARK4. Interacts with SQSTM1 when polyubiquitinated. Interacts with PSMC2 through SQSTM1. Interacts with FKBP4. Binds to CSNK1D. Interacts with SGK1. Interacts with EPM2A; the interaction dephosphorylates MAPT at Ser-396. Interacts with PIN1. Interacts with LRRK2. Interacts with LRP1, leading to endocytosis; this interaction is reduced in the presence of LRPAP1/RAP. Post-translationally, polyubiquitinated. Requires functional TRAF6 and may provoke SQSTM1-dependent degradation by the proteasome. In terms of processing, phosphorylation at various serine and threonine residues in S-P or T-P motifs by proline-directed protein kinases (PDPK1, CDK1, CDK5, GSK3, MAPK) (a few sites per protein in interphase, more in mitosis), and at serine residues in K-X-G-S motifs by MAP/microtubule affinity-regulating kinase (MARK1, MARK2, MARK3 or MARK4), causing detachment from microtubules, and their disassembly. Phosphorylation at Ser-597 by BRSK1 and BRSK2 in neurons affects ability to bind microtubules and plays a role in neuron polarization. Phosphorylated by PHK. Dephosphorylation at several serine and threonine residues by the serine/threonine phosphatase PPP5C. Phosphorylation at Ser-214 by SGK1 mediates microtubule depolymerization and neurite formation in hippocampal neurons.

The protein localises to the cytoplasm. It is found in the cytosol. The protein resides in the cell membrane. Its subcellular location is the cytoskeleton. It localises to the cell projection. The protein localises to the axon. It is found in the dendrite. Its function is as follows. Promotes microtubule assembly and stability, and might be involved in the establishment and maintenance of neuronal polarity. The C-terminus binds axonal microtubules while the N-terminus binds neural plasma membrane components, suggesting that tau functions as a linker protein between both. Axonal polarity is predetermined by tau localization (in the neuronal cell) in the domain of the cell body defined by the centrosome. The short isoforms allow plasticity of the cytoskeleton whereas the longer isoforms may preferentially play a role in its stabilization. The protein is Microtubule-associated protein tau (MAPT) of Pan troglodytes (Chimpanzee).